A 197-amino-acid chain; its full sequence is Dephospho-CoA kinase (197 aa).

In terms of domain architecture, DPCK spans 2-197; sequence IIGITGGIAS…SALLSLANPR (196 aa). 10–15 contributes to the ATP binding site; sequence ASGKST.

The protein belongs to the CoaE family.

The protein localises to the cytoplasm. The enzyme catalyses 3'-dephospho-CoA + ATP = ADP + CoA + H(+). It functions in the pathway cofactor biosynthesis; coenzyme A biosynthesis; CoA from (R)-pantothenate: step 5/5. In terms of biological role, catalyzes the phosphorylation of the 3'-hydroxyl group of dephosphocoenzyme A to form coenzyme A. This is Dephospho-CoA kinase from Streptococcus pyogenes serotype M3 (strain ATCC BAA-595 / MGAS315).